Consider the following 301-residue polypeptide: Probable alpha-L-glutamate ligase (301 aa).

The 184-residue stretch at 104 to 287 folds into the ATP-grasp domain; sequence LQLLSRRGIG…VAGMIIEHLE (184 aa). ATP-binding positions include lysine 141, 178–179, aspartate 187, and 211–213; these read EY and RSN. Aspartate 248, glutamate 260, and asparagine 262 together coordinate Mg(2+). Positions 248, 260, and 262 each coordinate Mn(2+).

This sequence belongs to the RimK family. Mg(2+) serves as cofactor. It depends on Mn(2+) as a cofactor.

In Pseudomonas putida (strain W619), this protein is Probable alpha-L-glutamate ligase.